Reading from the N-terminus, the 243-residue chain is Adenosine 5'-phosphosulfate reductase (243 aa).

C126, C127, C209, and C212 together coordinate [4Fe-4S] cluster. The Nucleophile; cysteine thiosulfonate intermediate role is filled by C235.

Belongs to the PAPS reductase family. CysH subfamily. The cofactor is [4Fe-4S] cluster.

It localises to the cytoplasm. It catalyses the reaction [thioredoxin]-disulfide + sulfite + AMP + 2 H(+) = adenosine 5'-phosphosulfate + [thioredoxin]-dithiol. It functions in the pathway sulfur metabolism; hydrogen sulfide biosynthesis; sulfite from sulfate. Catalyzes the formation of sulfite from adenosine 5'-phosphosulfate (APS) using thioredoxin as an electron donor. The polypeptide is Adenosine 5'-phosphosulfate reductase (Staphylococcus epidermidis (strain ATCC 12228 / FDA PCI 1200)).